An 84-amino-acid chain; its full sequence is Large ribosomal subunit protein bL27 (84 aa).

Positions 1-20 (MAHKKGGGSTKNGRDSNPKY) are disordered.

This sequence belongs to the bacterial ribosomal protein bL27 family.

The polypeptide is Large ribosomal subunit protein bL27 (rpmA) (Prosthecochloris vibrioformis (Chlorobium vibrioforme)).